The chain runs to 339 residues: MSYFPILFFFFLKRCPSYTEPQNLTGVSEFLLLGLSEDPELQPVLAGLFLSMYLVTVLGNLLIILAVSSDSHLHTPMYFFLSNLSLADIGFTSTTVPKMIVDMQTHSRVISYEGCLTQMSFFVLFACMDDMLLSVMAYDRFVAICHPLHYRIIMNPRLCGFLILLSFFISLLDSQLHNLIMLQLTCFKDVDISNFFCDPSQLLHLRCSDTFINEMVIYFMGAIFGCLPISGILFSYYKIVSPILRVPTSDGKYKAFSTCGSHLAVVCLFYGTGLVGYLSSAVLPSPRKSMVASVMYTVVTPMLNPFIYSLRNKDIQSALCRLHGRIIKSHHLHPFCYMG.

At 1-43 the chain is on the extracellular side; the sequence is MSYFPILFFFFLKRCPSYTEPQNLTGVSEFLLLGLSEDPELQP. Asn-23 carries N-linked (GlcNAc...) asparagine glycosylation. The chain crosses the membrane as a helical span at residues 44-64; sequence VLAGLFLSMYLVTVLGNLLII. The Cytoplasmic segment spans residues 65–72; the sequence is LAVSSDSH. A helical transmembrane segment spans residues 73–93; it reads LHTPMYFFLSNLSLADIGFTS. Residues 94–117 lie on the Extracellular side of the membrane; sequence TTVPKMIVDMQTHSRVISYEGCLT. A disulfide bridge links Cys-115 with Cys-207. A helical membrane pass occupies residues 118-138; the sequence is QMSFFVLFACMDDMLLSVMAY. Topologically, residues 139-157 are cytoplasmic; it reads DRFVAICHPLHYRIIMNPR. A helical transmembrane segment spans residues 158-178; it reads LCGFLILLSFFISLLDSQLHN. Topologically, residues 179–215 are extracellular; the sequence is LIMLQLTCFKDVDISNFFCDPSQLLHLRCSDTFINEM. Residues 216 to 235 form a helical membrane-spanning segment; that stretch reads VIYFMGAIFGCLPISGILFS. At 236–255 the chain is on the cytoplasmic side; it reads YYKIVSPILRVPTSDGKYKA. A helical transmembrane segment spans residues 256-276; the sequence is FSTCGSHLAVVCLFYGTGLVG. Over 277–289 the chain is Extracellular; it reads YLSSAVLPSPRKS. Residues 290-310 form a helical membrane-spanning segment; sequence MVASVMYTVVTPMLNPFIYSL. The Cytoplasmic portion of the chain corresponds to 311 to 339; it reads RNKDIQSALCRLHGRIIKSHHLHPFCYMG.

The protein belongs to the G-protein coupled receptor 1 family.

Its subcellular location is the cell membrane. Odorant receptor. The polypeptide is Olfactory receptor 7E24 (OR7E24) (Homo sapiens (Human)).